Here is a 204-residue protein sequence, read N- to C-terminus: Probable 5-formyltetrahydrofolate cyclo-ligase (204 aa).

5–9 (KNQLR) is an ATP binding site. Substrate contacts are provided by residues E57, W102, and 140–144 (HGKGY). Residues 139–146 (GHGKGYYD) and D188 contribute to the ATP site.

Belongs to the 5-formyltetrahydrofolate cyclo-ligase family.

It carries out the reaction (6S)-5-formyl-5,6,7,8-tetrahydrofolate + ATP = (6R)-5,10-methenyltetrahydrofolate + ADP + phosphate. The sequence is that of Probable 5-formyltetrahydrofolate cyclo-ligase from Schizosaccharomyces pombe (strain 972 / ATCC 24843) (Fission yeast).